The sequence spans 499 residues: Glutamyl-tRNA(Gln) amidotransferase subunit A (499 aa).

Catalysis depends on charge relay system residues K75 and S150. The active-site Acyl-ester intermediate is the S174.

It belongs to the amidase family. GatA subfamily. In terms of assembly, heterotrimer of A, B and C subunits.

It carries out the reaction L-glutamyl-tRNA(Gln) + L-glutamine + ATP + H2O = L-glutaminyl-tRNA(Gln) + L-glutamate + ADP + phosphate + H(+). Its function is as follows. Allows the formation of correctly charged Gln-tRNA(Gln) through the transamidation of misacylated Glu-tRNA(Gln) in organisms which lack glutaminyl-tRNA synthetase. The reaction takes place in the presence of glutamine and ATP through an activated gamma-phospho-Glu-tRNA(Gln). In Ralstonia pickettii (strain 12J), this protein is Glutamyl-tRNA(Gln) amidotransferase subunit A.